The primary structure comprises 217 residues: Adenylate kinase (217 aa).

Position 10–15 (Gly-10–Thr-15) interacts with ATP. Residues Ser-30–Val-59 form an NMP region. AMP contacts are provided by residues Thr-31, Arg-36, Leu-57 to Val-59, Gly-85 to Arg-88, and Gln-92. The LID stretch occupies residues Gly-126–Asp-163. Arg-127 provides a ligand contact to ATP. Zn(2+)-binding residues include Cys-130 and Cys-133. ATP is bound at residue Val-136–Tyr-137. Residues Cys-150 and Asp-153 each coordinate Zn(2+). Positions 160 and 171 each coordinate AMP. Gln-199 contacts ATP.

This sequence belongs to the adenylate kinase family. In terms of assembly, monomer.

It localises to the cytoplasm. It carries out the reaction AMP + ATP = 2 ADP. Its pathway is purine metabolism; AMP biosynthesis via salvage pathway; AMP from ADP: step 1/1. Its function is as follows. Catalyzes the reversible transfer of the terminal phosphate group between ATP and AMP. Plays an important role in cellular energy homeostasis and in adenine nucleotide metabolism. This chain is Adenylate kinase, found in Aster yellows witches'-broom phytoplasma (strain AYWB).